A 219-amino-acid polypeptide reads, in one-letter code: Holliday junction branch migration complex subunit RuvA (219 aa).

Positions 1-66 are domain I; sequence MIEYIIGKIS…NFLFEYYGFK (66 aa). The domain II stretch occupies residues 67–148; the sequence is TLREKIFFEN…SEYNNDVNHS (82 aa). Residues 149–154 form a flexible linker region; sequence SINQQS. Positions 155–219 are domain III; that stretch reads NSYNPVPDLV…EAVTNKTTVS (65 aa).

Belongs to the RuvA family. As to quaternary structure, homotetramer. Forms an RuvA(8)-RuvB(12)-Holliday junction (HJ) complex. HJ DNA is sandwiched between 2 RuvA tetramers; dsDNA enters through RuvA and exits via RuvB. An RuvB hexamer assembles on each DNA strand where it exits the tetramer. Each RuvB hexamer is contacted by two RuvA subunits (via domain III) on 2 adjacent RuvB subunits; this complex drives branch migration. In the full resolvosome a probable DNA-RuvA(4)-RuvB(12)-RuvC(2) complex forms which resolves the HJ.

The protein resides in the cytoplasm. Its function is as follows. The RuvA-RuvB-RuvC complex processes Holliday junction (HJ) DNA during genetic recombination and DNA repair, while the RuvA-RuvB complex plays an important role in the rescue of blocked DNA replication forks via replication fork reversal (RFR). RuvA specifically binds to HJ cruciform DNA, conferring on it an open structure. The RuvB hexamer acts as an ATP-dependent pump, pulling dsDNA into and through the RuvAB complex. HJ branch migration allows RuvC to scan DNA until it finds its consensus sequence, where it cleaves and resolves the cruciform DNA. The sequence is that of Holliday junction branch migration complex subunit RuvA from Malacoplasma penetrans (strain HF-2) (Mycoplasma penetrans).